The following is a 95-amino-acid chain: uncharacterized protein (95 aa).

Positions 1-24 (MKKLATLTALAGALTMAVATAAQA) form a signal peptide, or 21. The span at 55 to 89 (EGKCGADKAKSAEGKCGEGKCGADKAKSAEGKCGE) shows a compositional bias: basic and acidic residues. A disordered region spans residues 55 to 95 (EGKCGADKAKSAEGKCGEGKCGADKAKSAEGKCGEGKCGSK).

This is an uncharacterized protein from Haemophilus influenzae (strain ATCC 51907 / DSM 11121 / KW20 / Rd).